Here is a 400-residue protein sequence, read N- to C-terminus: uncharacterized protein (400 aa).

Residues 161-380 enclose the TR mART core domain; the sequence is NDLLNIIDIV…YVVKVIVMRL (220 aa).

This is an uncharacterized protein from Acanthamoeba polyphaga (Amoeba).